Here is a 482-residue protein sequence, read N- to C-terminus: Class E basic helix-loop-helix protein 41 (482 aa).

Lys31 participates in a covalent cross-link: Glycyl lysine isopeptide (Lys-Gly) (interchain with G-Cter in SUMO2). One can recognise a bHLH domain in the interval Thr44–Leu99. Residues Leu67 to Leu71 form a necessary for interaction with RXRA and repressor activity towards RXRA region. Lys121 is covalently cross-linked (Glycyl lysine isopeptide (Lys-Gly) (interchain with G-Cter in SUMO2)). An Orange domain is found at Phe131–Leu166. A Glycyl lysine isopeptide (Lys-Gly) (interchain with G-Cter in SUMO2) cross-link involves residue Lys210. Disordered regions lie at residues Ala228–Ala298 and Val438–Pro482. The segment covering Ala246–Lys256 has biased composition (basic and acidic residues). Lys266 is covalently cross-linked (Glycyl lysine isopeptide (Lys-Gly) (interchain with G-Cter in SUMO2)). The span at Arg285 to Ala297 shows a compositional bias: gly residues.

As to quaternary structure, homodimer. Heterodimer with BHLHE40/DEC1. Interacts with CIART and BMAL1. Interacts with RXRA. Interacts with NR0B2 and HNF1A. Highly expressed in skeletal muscle and brain, moderately expressed in pancreas and heart, weakly expressed in placenta, lung, liver and kidney.

It is found in the nucleus. In terms of biological role, transcriptional repressor involved in the regulation of the circadian rhythm by negatively regulating the activity of the clock genes and clock-controlled genes. Acts as the negative limb of a novel autoregulatory feedback loop (DEC loop) which differs from the one formed by the PER and CRY transcriptional repressors (PER/CRY loop). Both these loops are interlocked as it represses the expression of PER1 and in turn is repressed by PER1/2 and CRY1/2. Represses the activity of the circadian transcriptional activator: CLOCK-BMAL1 heterodimer by competing for the binding to E-box elements (5'-CACGTG-3') found within the promoters of its target genes. Negatively regulates its own expression and the expression of DBP and BHLHE41/DEC2. Acts as a corepressor of RXR and the RXR-LXR heterodimers and represses the ligand-induced RXRA/B/G, NR1H3/LXRA, NR1H4 and VDR transactivation activity. Inhibits HNF1A-mediated transactivation of CYP1A2, CYP2E1 AND CYP3A11. This Homo sapiens (Human) protein is Class E basic helix-loop-helix protein 41.